The chain runs to 493 residues: Cysteine--tRNA ligase (493 aa).

Cys31 is a binding site for Zn(2+). Positions 33-43 (PTVYGDAHLGH) match the 'HIGH' region motif. Residues Cys226, His251, and Glu255 each coordinate Zn(2+). A 'KMSKS' region motif is present at residues 283-287 (KMGKS). ATP is bound at residue Lys286.

This sequence belongs to the class-I aminoacyl-tRNA synthetase family. As to quaternary structure, monomer. The cofactor is Zn(2+).

Its subcellular location is the cytoplasm. It carries out the reaction tRNA(Cys) + L-cysteine + ATP = L-cysteinyl-tRNA(Cys) + AMP + diphosphate. The chain is Cysteine--tRNA ligase from Phocaeicola vulgatus (strain ATCC 8482 / DSM 1447 / JCM 5826 / CCUG 4940 / NBRC 14291 / NCTC 11154) (Bacteroides vulgatus).